Here is a 468-residue protein sequence, read N- to C-terminus: Fibrinogen beta chain (468 aa).

The residue at position 1 (Gln1) is a Pyrrolidone carboxylic acid. The segment covering 1–10 has biased composition (acidic residues); sequence QFPTDYDEGQ. The interval 1-54 is disordered; sequence QFPTDYDEGQDDRPKVGLGARGHRPYDKKKEEAPSLRPVPPPISGGGYRARPAT. Thr4 carries an O-linked (GalNAc...) threonine glycan. Position 6 is a sulfotyrosine (Tyr6). Over residues 24-34 the composition is skewed to basic and acidic residues; the sequence is RPYDKKKEEAP. Residues 88–204 adopt a coiled-coil conformation; the sequence is KLQDTLVRQE…TQMEYCRTPC (117 aa). 2 disulfide bridges follow: Cys208/Cys293 and Cys218/Cys247. The region spanning 209–465 is the Fibrinogen C-terminal domain; the sequence is NIPVVSGKEC…KMSMKIRPYF (257 aa). Asn371 carries N-linked (GlcNAc...) asparagine glycosylation. A disulfide bridge connects residues Cys401 and Cys414.

Heterohexamer; disulfide linked. Contains 2 sets of 3 non-identical chains (alpha, beta and gamma). The 2 heterotrimers are in head to head conformation with the N-termini in a small central domain. In terms of processing, conversion of fibrinogen to fibrin is triggered by thrombin, which cleaves fibrinopeptides A and B from alpha and beta chains, and thus exposes the N-terminal polymerization sites responsible for the formation of the soft clot. The soft clot is converted into the hard clot by factor XIIIA which catalyzes the epsilon-(gamma-glutamyl)lysine cross-linking between gamma chains (stronger) and between alpha chains (weaker) of different monomers. Detected in blood plasma (at protein level).

It is found in the secreted. In terms of biological role, cleaved by the protease thrombin to yield monomers which, together with fibrinogen alpha (FGA) and fibrinogen gamma (FGG), polymerize to form an insoluble fibrin matrix. Fibrin has a major function in hemostasis as one of the primary components of blood clots. In addition, functions during the early stages of wound repair to stabilize the lesion and guide cell migration during re-epithelialization. Was originally thought to be essential for platelet aggregation, based on in vitro studies using anticoagulated blood. However subsequent studies have shown that it is not absolutely required for thrombus formation in vivo. Enhances expression of SELP in activated platelets. Maternal fibrinogen is essential for successful pregnancy. Fibrin deposition is also associated with infection, where it protects against IFNG-mediated hemorrhage. May also facilitate the antibacterial immune response via both innate and T-cell mediated pathways. The polypeptide is Fibrinogen beta chain (FGB) (Bos taurus (Bovine)).